The chain runs to 208 residues: FMN-dependent NADH:quinone oxidoreductase 1 (208 aa).

Position 17-19 (17-19 (SVS)) interacts with FMN.

This sequence belongs to the azoreductase type 1 family. As to quaternary structure, homodimer. The cofactor is FMN.

The enzyme catalyses 2 a quinone + NADH + H(+) = 2 a 1,4-benzosemiquinone + NAD(+). It carries out the reaction N,N-dimethyl-1,4-phenylenediamine + anthranilate + 2 NAD(+) = 2-(4-dimethylaminophenyl)diazenylbenzoate + 2 NADH + 2 H(+). Functionally, quinone reductase that provides resistance to thiol-specific stress caused by electrophilic quinones. Its function is as follows. Also exhibits azoreductase activity. Catalyzes the reductive cleavage of the azo bond in aromatic azo compounds to the corresponding amines. In Listeria monocytogenes serotype 4b (strain F2365), this protein is FMN-dependent NADH:quinone oxidoreductase 1.